The chain runs to 249 residues: Glucosamine-6-phosphate deaminase (249 aa).

The Proton acceptor; for enolization step role is filled by aspartate 67. Asparagine 136 serves as the catalytic For ring-opening step. Histidine 138 serves as the catalytic Proton acceptor; for ring-opening step. Residue glutamate 143 is the For ring-opening step of the active site.

It belongs to the glucosamine/galactosamine-6-phosphate isomerase family. NagB subfamily.

The catalysed reaction is alpha-D-glucosamine 6-phosphate + H2O = beta-D-fructose 6-phosphate + NH4(+). Its pathway is amino-sugar metabolism; N-acetylneuraminate degradation; D-fructose 6-phosphate from N-acetylneuraminate: step 5/5. Catalyzes the reversible isomerization-deamination of glucosamine 6-phosphate (GlcN6P) to form fructose 6-phosphate (Fru6P) and ammonium ion. In Clostridioides difficile (strain 630) (Peptoclostridium difficile), this protein is Glucosamine-6-phosphate deaminase.